Consider the following 739-residue polypeptide: Catalase-peroxidase (739 aa).

The N-terminal stretch at 1-23 is a signal peptide; that stretch reads MLKKIVTALGMSGMLLASNSAIA. The tryptophyl-tyrosyl-methioninium (Trp-Tyr) (with M-247) cross-link spans 100–221; the sequence is WHDAGTYRIY…YAATQMGLIY (122 aa). H101 serves as the catalytic Proton acceptor. The tryptophyl-tyrosyl-methioninium (Tyr-Met) (with W-100) cross-link spans 221-247; that stretch reads YVNPEGPDGKPDIKGAASEIRQAFRAM. H262 contributes to the heme b binding site.

It belongs to the peroxidase family. Peroxidase/catalase subfamily. In terms of assembly, homodimer or homotetramer. Heme b serves as cofactor. Post-translationally, formation of the three residue Trp-Tyr-Met cross-link is important for the catalase, but not the peroxidase activity of the enzyme.

The enzyme catalyses H2O2 + AH2 = A + 2 H2O. The catalysed reaction is 2 H2O2 = O2 + 2 H2O. Its function is as follows. Bifunctional enzyme with both catalase and broad-spectrum peroxidase activity. In Francisella tularensis subsp. novicida (strain U112), this protein is Catalase-peroxidase.